We begin with the raw amino-acid sequence, 296 residues long: Fructose-bisphosphate aldolase class 1 (296 aa).

Catalysis depends on E175, which acts as the Proton acceptor. K212 functions as the Schiff-base intermediate with dihydroxyacetone-P in the catalytic mechanism.

This sequence belongs to the class I fructose-bisphosphate aldolase family.

The enzyme catalyses beta-D-fructose 1,6-bisphosphate = D-glyceraldehyde 3-phosphate + dihydroxyacetone phosphate. It functions in the pathway carbohydrate degradation; glycolysis; D-glyceraldehyde 3-phosphate and glycerone phosphate from D-glucose: step 4/4. This Staphylococcus epidermidis (strain ATCC 12228 / FDA PCI 1200) protein is Fructose-bisphosphate aldolase class 1 (fda).